The chain runs to 500 residues: 4-aminobutyrate aminotransferase, mitochondrial (500 aa).

A mitochondrion-targeting transit peptide spans 1 to 28 (MASVLLTRRLACSFRHNHRLLVPGWRHI). C163 is a [2Fe-2S] cluster binding site. Residue 164–165 (GS) coordinates pyridoxal 5'-phosphate. [2Fe-2S] cluster is bound at residue C166. R220 is a binding site for substrate. Residue K231 is modified to N6-succinyllysine. K252 carries the post-translational modification N6-acetyllysine; alternate. Residue K252 is modified to N6-succinyllysine; alternate. 2 positions are modified to N6-acetyllysine: K279 and K318. The residue at position 357 (K357) is an N6-(pyridoxal phosphate)lysine. Residue T381 participates in pyridoxal 5'-phosphate binding. The residue at position 413 (K413) is an N6-acetyllysine; alternate. An N6-succinyllysine; alternate modification is found at K413. N6-acetyllysine is present on residues K452 and K470.

Belongs to the class-III pyridoxal-phosphate-dependent aminotransferase family. In terms of assembly, homodimer; disulfide-linked. Pyridoxal 5'-phosphate serves as cofactor. The cofactor is [2Fe-2S] cluster.

The protein resides in the mitochondrion matrix. It carries out the reaction 4-aminobutanoate + 2-oxoglutarate = succinate semialdehyde + L-glutamate. The enzyme catalyses (S)-3-amino-2-methylpropanoate + 2-oxoglutarate = 2-methyl-3-oxopropanoate + L-glutamate. Functionally, catalyzes the conversion of gamma-aminobutyrate and L-beta-aminoisobutyrate to succinate semialdehyde and methylmalonate semialdehyde, respectively. Can also convert delta-aminovalerate and beta-alanine. In Sus scrofa (Pig), this protein is 4-aminobutyrate aminotransferase, mitochondrial (ABAT).